A 252-amino-acid chain; its full sequence is tRNA-cytidine(32) 2-sulfurtransferase (252 aa).

The PP-loop motif signature appears at 37-42 (SGGKDS). Residues cysteine 112, cysteine 115, and cysteine 202 each coordinate [4Fe-4S] cluster.

The protein belongs to the TtcA family. In terms of assembly, homodimer. Mg(2+) serves as cofactor. Requires [4Fe-4S] cluster as cofactor.

Its subcellular location is the cytoplasm. It catalyses the reaction cytidine(32) in tRNA + S-sulfanyl-L-cysteinyl-[cysteine desulfurase] + AH2 + ATP = 2-thiocytidine(32) in tRNA + L-cysteinyl-[cysteine desulfurase] + A + AMP + diphosphate + H(+). It participates in tRNA modification. Catalyzes the ATP-dependent 2-thiolation of cytidine in position 32 of tRNA, to form 2-thiocytidine (s(2)C32). The sulfur atoms are provided by the cysteine/cysteine desulfurase (IscS) system. The protein is tRNA-cytidine(32) 2-sulfurtransferase of Geotalea uraniireducens (strain Rf4) (Geobacter uraniireducens).